A 126-amino-acid chain; its full sequence is Small ribosomal subunit protein uS8 (126 aa).

The protein belongs to the universal ribosomal protein uS8 family. Part of the 30S ribosomal subunit. Contacts proteins S5 and S12.

Functionally, one of the primary rRNA binding proteins, it binds directly to 16S rRNA central domain where it helps coordinate assembly of the platform of the 30S subunit. The sequence is that of Small ribosomal subunit protein uS8 from Nitratidesulfovibrio vulgaris (strain ATCC 29579 / DSM 644 / CCUG 34227 / NCIMB 8303 / VKM B-1760 / Hildenborough) (Desulfovibrio vulgaris).